A 92-amino-acid chain; its full sequence is UPF0250 protein VP0718 (92 aa).

The protein belongs to the UPF0250 family.

In Vibrio parahaemolyticus serotype O3:K6 (strain RIMD 2210633), this protein is UPF0250 protein VP0718.